The following is a 380-amino-acid chain: MGRRFLRGILTLPLRSVLQAQHRMLGSEQDPPAKRPRNNLMAPPRIGTHNGTFHCDEALACALLRLLPEYANAEIVRTRDPEKLASCDIVVDVGGEYNPQSHRYDHHQRTFTETMSSLCPGKPWQTKLSSAGLVYLHFGRKLLAQLLGTSEEDSVVDTIYDKMYENFVEEVDAVDNGISQWAEGEPRYAMTTTLSARVARLNPTWNQPNQDTEAGFRRAMDLVQEEFLQRLNFYQHSWLPARALVEEALAQRFKVDSSGEIVELAKGGCPWKEHLYHLESELSPKVAITFVIYTDQAGQWRVQCVPKEPHSFQSRLPLPEPWRGLRDKALDQVSGIPGCIFVHASGFIGGHHTREGALNMARATLAQRPAPVPLANAVVQ.

The transit peptide at 1-46 (MGRRFLRGILTLPLRSVLQAQHRMLGSEQDPPAKRPRNNLMAPPRI) directs the protein to the mitochondrion. An N6-acetyllysine mark is found at Lys-266 and Lys-272.

Belongs to the MYG1 family. As to expression, ubiquitously expressed, with highest levels in testis.

The protein resides in the nucleus. The protein localises to the nucleoplasm. It localises to the mitochondrion matrix. It is found in the nucleolus. In terms of biological role, 3'-5' RNA exonuclease which cleaves in situ on specific transcripts in both nucleus and mitochondrion. Involved in regulating spatially segregated organellar RNA processing, acts as a coordinator of nucleo-mitochondrial crosstalk. In nucleolus, processes pre-ribosomal RNA involved in ribosome assembly and alters cytoplasmic translation. In mitochondrial matrix, processes 3'-termini of the mito-ribosomal and messenger RNAs and controls translation of mitochondrial proteins. This is MYG1 exonuclease from Mus musculus (Mouse).